The sequence spans 116 residues: Large ribosomal subunit protein uL18 (116 aa).

It belongs to the universal ribosomal protein uL18 family. As to quaternary structure, part of the 50S ribosomal subunit; part of the 5S rRNA/L5/L18/L25 subcomplex. Contacts the 5S and 23S rRNAs.

This is one of the proteins that bind and probably mediate the attachment of the 5S RNA into the large ribosomal subunit, where it forms part of the central protuberance. The chain is Large ribosomal subunit protein uL18 from Acinetobacter baylyi (strain ATCC 33305 / BD413 / ADP1).